Consider the following 597-residue polypeptide: Arginine--tRNA ligase (597 aa).

A 'HIGH' region motif is present at residues 125-135; sequence PNTNKPLHLGH.

Belongs to the class-I aminoacyl-tRNA synthetase family. As to quaternary structure, monomer.

The protein resides in the cytoplasm. The enzyme catalyses tRNA(Arg) + L-arginine + ATP = L-arginyl-tRNA(Arg) + AMP + diphosphate. The chain is Arginine--tRNA ligase from Bacteroides thetaiotaomicron (strain ATCC 29148 / DSM 2079 / JCM 5827 / CCUG 10774 / NCTC 10582 / VPI-5482 / E50).